A 148-amino-acid polypeptide reads, in one-letter code: UPF0179 protein Ta1159 (148 aa).

It belongs to the UPF0179 family.

In Thermoplasma acidophilum (strain ATCC 25905 / DSM 1728 / JCM 9062 / NBRC 15155 / AMRC-C165), this protein is UPF0179 protein Ta1159.